A 187-amino-acid chain; its full sequence is MNLQDHFLIAMPHLEDENFQRSVVYICENNEQGSMGLVLTQATDLSIAELCAKMNFMMADEREYSDKLVLLGGPVNLEHGFILHKKTAQEFQHSYKVTDQIYLTTSADIINTFGTAQSPEKYLVTLGCARWEPNQLENEIANNDWLVVPADENILFDVNSSERWFAANQLLGIEHVNFSYQQQMEHS.

It belongs to the UPF0301 (AlgH) family.

In Histophilus somni (strain 2336) (Haemophilus somnus), this protein is UPF0301 protein HSM_1900.